The chain runs to 3707 residues: CUB and sushi domain-containing protein 3 (3707 aa).

The segment at 1 to 21 (MKGIRKGESRAKESKPWEPGK) is disordered. Residues 1–42 (MKGIRKGESRAKESKPWEPGKRRCAKCGRLDFILMKKMGIKS) are Cytoplasmic-facing. The helical transmembrane segment at 43-63 (GFTFWNLVFLLTVSCVKGFIY) threads the bilayer. Residues 64-3630 (TCGGTLKGLN…NQPHGTNSSS (3567 aa)) lie on the Extracellular side of the membrane. 4 disulfide bridges follow: cysteine 65–cysteine 91, cysteine 178–cysteine 218, cysteine 204–cysteine 235, and cysteine 241–cysteine 267. The CUB 1 domain maps to 65–173 (CGGTLKGLNG…HGFKVYYEEL (109 aa)). N-linked (GlcNAc...) asparagine glycans are attached at residues asparagine 73 and asparagine 90. Residues 176-237 (SSCGNPGVPP…WDFPVPICRA (62 aa)) form the Sushi 1 domain. Positions 241-345 (CGGTMRGSSG…RGFSAPYQGS (105 aa)) constitute a CUB 2 domain. Residues asparagine 361 and asparagine 409 are each glycosylated (N-linked (GlcNAc...) asparagine). A disordered region spans residues 394-435 (QRVQVTSLRNSGLDPNTSKDGLSPHPADTQSTRRRPRHAEQI). Residues 396–413 (VQVTSLRNSGLDPNTSKD) are compositionally biased toward polar residues. The 62-residue stretch at 484–545 (NLCPDPGEPE…WSDHRPVCKV (62 aa)) folds into the Sushi 2 domain. Cystine bridges form between cysteine 486–cysteine 526, cysteine 512–cysteine 543, cysteine 548–cysteine 574, cysteine 664–cysteine 704, cysteine 690–cysteine 717, and cysteine 721–cysteine 747. One can recognise a CUB 3 domain in the interval 548-659 (CGSNLQGPSG…VGFKVNYKEI (112 aa)). In terms of domain architecture, Sushi 3 spans 662–719 (ESCGDPGTPLYGIREGDGFSNRDVLRFECQFGFELIGEKSIVCQENNQWSANIPICIF). Residues 721 to 829 (CLSNFTAPMG…RGFNITYNTF (109 aa)) enclose the CUB 4 domain. N-linked (GlcNAc...) asparagine glycosylation is found at asparagine 724 and asparagine 823. One can recognise a Sushi 4 domain in the interval 832-893 (NECPDPGIPI…WSGLIPKCGA (62 aa)). 3 disulfide bridges follow: cysteine 834–cysteine 875, cysteine 860–cysteine 891, and cysteine 895–cysteine 921. One can recognise a CUB 5 domain in the interval 895 to 1003 (CGGHFSAPSG…NGFKIHYESV (109 aa)). N-linked (GlcNAc...) asparagine glycosylation occurs at asparagine 966. The 58-residue stretch at 1008-1065 (YSCLDPGIPVHGRRYGHDFSIGSTVSFSCDSGYRLSHEEPLLCEKNHWWSHPLPTCDA) folds into the Sushi 5 domain. 3 disulfides stabilise this stretch: cysteine 1010–cysteine 1050, cysteine 1036–cysteine 1063, and cysteine 1067–cysteine 1093. A CUB 6 domain is found at 1067-1177 (CGGDVRGPSG…EGFNITFSEY (111 aa)). Asparagine 1092, asparagine 1126, and asparagine 1171 each carry an N-linked (GlcNAc...) asparagine glycan. The Sushi 6 domain maps to 1180–1239 (EPCEDPGIPQYGSRIGFNFGIGDTLTFSCSSGYRLEGTSEIICLGGGRRVWSAPLPRCVA). Disulfide bonds link cysteine 1182–cysteine 1222, cysteine 1208–cysteine 1237, and cysteine 1241–cysteine 1267. Positions 1241 to 1349 (CGASATNNEG…EGFQLVYTSF (109 aa)) constitute a CUB 7 domain. Asparagine 1280 carries an N-linked (GlcNAc...) asparagine glycan. Positions 1352–1412 (SHCEDPGIPQ…WDYPLPSCIA (61 aa)) constitute a Sushi 7 domain. 12 disulfide bridges follow: cysteine 1354-cysteine 1395, cysteine 1381-cysteine 1410, cysteine 1414-cysteine 1441, cysteine 1528-cysteine 1568, cysteine 1554-cysteine 1584, cysteine 1588-cysteine 1614, cysteine 1701-cysteine 1741, cysteine 1727-cysteine 1758, cysteine 1762-cysteine 1788, cysteine 1878-cysteine 1918, cysteine 1904-cysteine 1935, and cysteine 1939-cysteine 1965. A CUB 8 domain is found at 1414–1523 (CGGRFKGESS…SGFAIQFSSS (110 aa)). Residues 1526–1586 (TACRDPGVPM…WQPSPPVCIA (61 aa)) form the Sushi 8 domain. N-linked (GlcNAc...) asparagine glycosylation occurs at asparagine 1536. The region spanning 1588–1696 (CGGNLTGSSG…TGFHLEYKAK (109 aa)) is the CUB 9 domain. Residues asparagine 1591 and asparagine 1709 are each glycosylated (N-linked (GlcNAc...) asparagine). The region spanning 1699–1760 (ESCFDPGNIM…WNRALPSCHA (62 aa)) is the Sushi 9 domain. In terms of domain architecture, CUB 10 spans 1762-1870 (CGSRSTGSEG…KGFHFVYQAV (109 aa)). N-linked (GlcNAc...) asparagine glycosylation is present at asparagine 1781. The region spanning 1876 to 1937 (TQCSSVPEPR…WNDSLPTCIV (62 aa)) is the Sushi 10 domain. A glycan (N-linked (GlcNAc...) asparagine) is linked at asparagine 1929. Positions 1939–2047 (CGGILTKRKG…AGFHLEYTAI (109 aa)) constitute a CUB 11 domain. Asparagine 2019 carries an N-linked (GlcNAc...) asparagine glycan. The Sushi 11 domain maps to 2050-2109 (DSCPEPQTPSSGIKIGDRYMVGDVVSFQCDQGYSLQGHSHITCMPGPVRRWNYPIPICLA). 3 disulfide bridges follow: cysteine 2052/cysteine 2092, cysteine 2078/cysteine 2107, and cysteine 2111/cysteine 2137. In terms of domain architecture, CUB 12 spans 2111–2219 (CGGAMSDFSG…QGFHIVYQAY (109 aa)). Asparagine 2155 is a glycosylation site (N-linked (GlcNAc...) asparagine). The Sushi 12 domain occupies 2222–2281 (QSCPDPRPFRNGFVIGNDFTVGQTISFECFPGYTLIGNSALTCLHGVSRNWNHPLPRCEA). 3 cysteine pairs are disulfide-bonded: cysteine 2224-cysteine 2264, cysteine 2250-cysteine 2279, and cysteine 2283-cysteine 2309. In terms of domain architecture, CUB 13 spans 2283–2394 (CGGNITAMNG…LSYHAYQLRV (112 aa)). 3 N-linked (GlcNAc...) asparagine glycosylation sites follow: asparagine 2286, asparagine 2291, and asparagine 2324. One can recognise a Sushi 13 domain in the interval 2393-2454 (RVCQPPPPVP…MDGAPPVCQV (62 aa)). Cystine bridges form between cysteine 2395-cysteine 2437, cysteine 2423-cysteine 2452, and cysteine 2456-cysteine 2484. In terms of domain architecture, CUB 14 spans 2456–2567 (CPANELRLDS…KGFRIRYIAF (112 aa)). Asparagine 2495 and asparagine 2537 each carry an N-linked (GlcNAc...) asparagine glycan. Sushi domains follow at residues 2567–2629 (FYCS…ACQA), 2630–2691 (ISCG…RCVV), 2692–2756 (VTCP…YCQI), 2757–2814 (ISCG…RCLA), 2815–2872 (GHCG…SCVP), 2873–2930 (VSCG…MCKV), 2931–2992 (VNCS…ECIM), 2993–3050 (IDCG…HCSG), 3054–3111 (GTCG…ECKA), 3112–3170 (VQCG…NCTI), 3171–3230 (ISCG…TCRA), 3231–3288 (VTCP…QCLP), 3289–3346 (KFCG…HCIE), 3350–3408 (TSCE…ECIP), and 3409–3468 (HSCK…ICEA). 12 cysteine pairs are disulfide-bonded: cysteine 2569–cysteine 2610, cysteine 2596–cysteine 2627, cysteine 2632–cysteine 2674, cysteine 2658–cysteine 2689, cysteine 2694–cysteine 2739, cysteine 2725–cysteine 2754, cysteine 2759–cysteine 2799, cysteine 2785–cysteine 2812, cysteine 2817–cysteine 2857, cysteine 2843–cysteine 2870, cysteine 2875–cysteine 2915, and cysteine 2901–cysteine 2928. 2 N-linked (GlcNAc...) asparagine glycosylation sites follow: asparagine 2711 and asparagine 2742. N-linked (GlcNAc...) asparagine glycosylation occurs at asparagine 2862. Asparagine 2932 and asparagine 2952 each carry an N-linked (GlcNAc...) asparagine glycan. 18 disulfides stabilise this stretch: cysteine 2933/cysteine 2977, cysteine 2963/cysteine 2990, cysteine 2995/cysteine 3035, cysteine 3021/cysteine 3048, cysteine 3056/cysteine 3096, cysteine 3082/cysteine 3109, cysteine 3114/cysteine 3155, cysteine 3141/cysteine 3168, cysteine 3173/cysteine 3215, cysteine 3199/cysteine 3228, cysteine 3233/cysteine 3273, cysteine 3259/cysteine 3286, cysteine 3291/cysteine 3331, cysteine 3317/cysteine 3344, cysteine 3352/cysteine 3393, cysteine 3379/cysteine 3406, cysteine 3411/cysteine 3453, and cysteine 3438/cysteine 3466. Asparagine 3099 carries an N-linked (GlcNAc...) asparagine glycan. Asparagine 3158, asparagine 3167, asparagine 3194, asparagine 3208, and asparagine 3218 each carry an N-linked (GlcNAc...) asparagine glycan. N-linked (GlcNAc...) asparagine glycosylation is present at asparagine 3276. N-linked (GlcNAc...) asparagine glycosylation occurs at asparagine 3364. 5 N-linked (GlcNAc...) asparagine glycosylation sites follow: asparagine 3522, asparagine 3529, asparagine 3612, asparagine 3618, and asparagine 3627. The helical transmembrane segment at 3631-3651 (VAIAILVPFFALIFAGFGFYL) threads the bilayer. Over 3652-3707 (YKQRTAPKTQYTGCSVHENNNGQAAFENPMYDTNAKSVEGKAVRFDPNLNTVCTMV) the chain is Cytoplasmic.

Belongs to the CSMD family. As to expression, weakly expressed in most tissues, except in brain. Expressed at intermediate level in brain, including cerebellum, substantia nigra, thalamus, spinal cord, hippocampus and fetal brain. Also expressed in testis.

Its subcellular location is the cell membrane. Functionally, involved in dendrite development. In Homo sapiens (Human), this protein is CUB and sushi domain-containing protein 3 (CSMD3).